A 651-amino-acid chain; its full sequence is Bromodomain-containing protein 7 (651 aa).

Lysine 21 is covalently cross-linked (Glycyl lysine isopeptide (Lys-Gly) (interchain with G-Cter in SUMO2)). The tract at residues 34-103 is disordered; the sequence is VTELSTGSSG…RDRAENEVDR (70 aa). Over residues 35-45 the composition is skewed to polar residues; it reads TELSTGSSGHD. A compositionally biased stretch (basic and acidic residues) spans 47 to 57; sequence SLFEDRSDHDK. Residues 58–69 are compositionally biased toward basic residues; that stretch reads HKDRKRKKRKKG. Positions 65–96 match the Nuclear localization signal motif; that stretch reads KRKKGEKQAPGEEKGRKRRRVKEDKKKRDRDR. Residues 70–103 show a composition bias toward basic and acidic residues; that stretch reads EKQAPGEEKGRKRRRVKEDKKKRDRDRAENEVDR. Glycyl lysine isopeptide (Lys-Gly) (interchain with G-Cter in SUMO2) cross-links involve residues lysine 127, lysine 186, lysine 197, lysine 201, lysine 212, and lysine 241. The Bromo domain occupies 131–235; the sequence is VEQTPLQEAL…HSGMKILSQE (105 aa). A disordered region spans residues 252–316; that stretch reads KTRKQKERTD…RSSNSEREHE (65 aa). Phosphoserine is present on residues serine 279 and serine 289. The segment covering 290–316 has biased composition (basic and acidic residues); the sequence is PAKDNKRKDKDVLEDKWRSSNSEREHE. A Glycyl lysine isopeptide (Lys-Gly) (interchain with G-Cter in SUMO2) cross-link involves residue lysine 305. The residue at position 328 (lysine 328) is an N6-acetyllysine. Residue lysine 344 forms a Glycyl lysine isopeptide (Lys-Gly) (interchain with G-Cter in SUMO2) linkage. At serine 380 the chain carries Phosphoserine. Residue lysine 389 forms a Glycyl lysine isopeptide (Lys-Gly) (interchain with G-Cter in SUMO2) linkage. Serine 475, serine 482, and serine 483 each carry phosphoserine. Residues 536–567 are a coiled coil; sequence SEEAEVFQRKLDETTRLLRELQEAQNERLSTR. The residue at position 621 (serine 621) is a Phosphoserine.

As to quaternary structure, interacts with IRF2 and HNRPUL1. Interacts (via N-terminus) with TP53. Interacts (via C-terminus) with EP300. Interacts with BRCA1. Interacts (via bromo domain) with histone H3 (via N-terminus) acetylated at 'Lys-14' (H3K14ac). Has low affinity for histone H3 acetylated at 'Lys-9' (H3K9ac). Has the highest affinity for histone H3 that is acetylated both at 'Lys-9' (H3K9ac) and at 'Lys-14' (H3K14ac). Has very low affinity for non-acetylated histone H3. Interacts (via bromo domain) with histone H4 (via N-terminus) acetylated at 'Lys-8' (H3K8ac) (in vitro). Interacts with TRIM24, PTPN13 and DVL1. Identified in a complex with SMARCA4/BRG1, SMARCC1/BAF155, SMARCE1/BAF57, DPF2/BAF45D and ARID2, subunits of the SWI/SNF-B (PBAF) chromatin remodeling complex. As to expression, ubiquitous.

The protein resides in the nucleus. The protein localises to the chromosome. In terms of biological role, acts both as coactivator and as corepressor. May play a role in chromatin remodeling. Transcriptional corepressor that down-regulates the expression of target genes. Binds to target promoters, leading to increased histone H3 acetylation at 'Lys-9' (H3K9ac). Binds to the ESR1 promoter. Recruits BRCA1 and POU2F1 to the ESR1 promoter. Coactivator for TP53-mediated activation of transcription of a set of target genes. Required for TP53-mediated cell-cycle arrest in response to oncogene activation. Promotes acetylation of TP53 at 'Lys-382', and thereby promotes efficient recruitment of TP53 to target promoters. Inhibits cell cycle progression from G1 to S phase. Activator of the Wnt signaling pathway in a DVL1-dependent manner by negatively regulating the GSK3B phosphotransferase activity. Induces dephosphorylation of GSK3B at 'Tyr-216'. Down-regulates TRIM24-mediated activation of transcriptional activation by AR. In Mus musculus (Mouse), this protein is Bromodomain-containing protein 7 (Brd7).